A 278-amino-acid chain; its full sequence is UPF0761 membrane protein CBU_1578 (278 aa).

The next 7 helical transmembrane spans lie at 38–58, 68–88, 92–112, 134–154, 177–197, 207–227, and 244–264; these read LLALVPLTIVAFTLLSFVPAF, LIWENFVPTSAGMVAAYLSQL, VTGLSIINIFFLGIVALLLMY, FLIYFMVLLLSPFLLGAVMLL, LLFVLPYVLIFITFTLFNWVL, AVIGGLVTTVLFELAKFAFTV, and VIPIFLVWLYVSWTIILLGAV.

This sequence belongs to the UPF0761 family.

The protein localises to the cell inner membrane. In Coxiella burnetii (strain RSA 493 / Nine Mile phase I), this protein is UPF0761 membrane protein CBU_1578.